The sequence spans 275 residues: 2,3,4,5-tetrahydropyridine-2,6-dicarboxylate N-succinyltransferase (275 aa).

Substrate-binding residues include R106 and D143.

This sequence belongs to the transferase hexapeptide repeat family. Homotrimer.

It is found in the cytoplasm. It carries out the reaction (S)-2,3,4,5-tetrahydrodipicolinate + succinyl-CoA + H2O = (S)-2-succinylamino-6-oxoheptanedioate + CoA. It functions in the pathway amino-acid biosynthesis; L-lysine biosynthesis via DAP pathway; LL-2,6-diaminopimelate from (S)-tetrahydrodipicolinate (succinylase route): step 1/3. This Cupriavidus pinatubonensis (strain JMP 134 / LMG 1197) (Cupriavidus necator (strain JMP 134)) protein is 2,3,4,5-tetrahydropyridine-2,6-dicarboxylate N-succinyltransferase.